The following is an 83-amino-acid chain: Small ribosomal subunit protein eS21 (83 aa).

This sequence belongs to the eukaryotic ribosomal protein eS21 family. Component of the 40S small ribosomal subunit.

It is found in the cytoplasm. It localises to the cytosol. The protein localises to the rough endoplasmic reticulum. Functionally, component of the small ribosomal subunit. The ribosome is a large ribonucleoprotein complex responsible for the synthesis of proteins in the cell. The protein is Small ribosomal subunit protein eS21 (rps21) of Xenopus tropicalis (Western clawed frog).